The sequence spans 317 residues: MNPNYLDFEQPIADLEAKIEELRMVGNDTDINITDEISRLKKKSISLTESIFSDLKSWDIARLARHPRRPYTQDYIDLIFEDFDELHGDRRYADDLSIIGGTARLDNTPVMIIGHQKGREVRDKVKRNFGMPRPEGYRKALRLMEMAERFKMPILTFIDTPGAYPGIGAEERGQSEAIAFNLAVMSRLKTPIISTVIGEGGSGGALAIGVCDQLNMLQYSTYAVISPEGCASILWKSAEYAAQAAEAMGVTADRLKELGVADHVIDEPLGGAHRNPEKMAETLKTSLAQGVAELSRLPLDELVSRRYERLTRYDGGR.

The CoA carboxyltransferase C-terminal domain maps to 39-293 (RLKKKSISLT…KTSLAQGVAE (255 aa)).

Belongs to the AccA family. In terms of assembly, acetyl-CoA carboxylase is a heterohexamer composed of biotin carboxyl carrier protein (AccB), biotin carboxylase (AccC) and two subunits each of ACCase subunit alpha (AccA) and ACCase subunit beta (AccD).

The protein resides in the cytoplasm. It catalyses the reaction N(6)-carboxybiotinyl-L-lysyl-[protein] + acetyl-CoA = N(6)-biotinyl-L-lysyl-[protein] + malonyl-CoA. It functions in the pathway lipid metabolism; malonyl-CoA biosynthesis; malonyl-CoA from acetyl-CoA: step 1/1. Component of the acetyl coenzyme A carboxylase (ACC) complex. First, biotin carboxylase catalyzes the carboxylation of biotin on its carrier protein (BCCP) and then the CO(2) group is transferred by the carboxyltransferase to acetyl-CoA to form malonyl-CoA. In Marinobacter nauticus (strain ATCC 700491 / DSM 11845 / VT8) (Marinobacter aquaeolei), this protein is Acetyl-coenzyme A carboxylase carboxyl transferase subunit alpha.